A 161-amino-acid chain; its full sequence is Putative pre-16S rRNA nuclease (161 aa).

Positions 142-161 (AGSPPGALVPRNRVDPDRHA) are disordered.

The protein belongs to the YqgF nuclease family.

Its subcellular location is the cytoplasm. Could be a nuclease involved in processing of the 5'-end of pre-16S rRNA. The chain is Putative pre-16S rRNA nuclease from Clavibacter sepedonicus (Clavibacter michiganensis subsp. sepedonicus).